The chain runs to 255 residues: Octanoyltransferase (255 aa).

A BPL/LPL catalytic domain is found at 54–238 (GDAAELVWLL…AFTEIFGATV (185 aa)). Residues 92–99 (RGGQLTYH), 167–169 (AIG), and 180–182 (GIA) each bind substrate. The active-site Acyl-thioester intermediate is the Cys198.

This sequence belongs to the LipB family.

The protein localises to the cytoplasm. It carries out the reaction octanoyl-[ACP] + L-lysyl-[protein] = N(6)-octanoyl-L-lysyl-[protein] + holo-[ACP] + H(+). It functions in the pathway protein modification; protein lipoylation via endogenous pathway; protein N(6)-(lipoyl)lysine from octanoyl-[acyl-carrier-protein]: step 1/2. In terms of biological role, catalyzes the transfer of endogenously produced octanoic acid from octanoyl-acyl-carrier-protein onto the lipoyl domains of lipoate-dependent enzymes. Lipoyl-ACP can also act as a substrate although octanoyl-ACP is likely to be the physiological substrate. This is Octanoyltransferase from Rhodopseudomonas palustris (strain HaA2).